A 199-amino-acid chain; its full sequence is Imidazole glycerol phosphate synthase subunit HisH (199 aa).

One can recognise a Glutamine amidotransferase type-1 domain in the interval 3–199 (NITIIDTGCA…LKNFVEKVPF (197 aa)). The active-site Nucleophile is Cys-78. Catalysis depends on residues His-178 and Glu-180.

In terms of assembly, heterodimer of HisH and HisF.

It localises to the cytoplasm. It carries out the reaction 5-[(5-phospho-1-deoxy-D-ribulos-1-ylimino)methylamino]-1-(5-phospho-beta-D-ribosyl)imidazole-4-carboxamide + L-glutamine = D-erythro-1-(imidazol-4-yl)glycerol 3-phosphate + 5-amino-1-(5-phospho-beta-D-ribosyl)imidazole-4-carboxamide + L-glutamate + H(+). The catalysed reaction is L-glutamine + H2O = L-glutamate + NH4(+). It functions in the pathway amino-acid biosynthesis; L-histidine biosynthesis; L-histidine from 5-phospho-alpha-D-ribose 1-diphosphate: step 5/9. Functionally, IGPS catalyzes the conversion of PRFAR and glutamine to IGP, AICAR and glutamate. The HisH subunit catalyzes the hydrolysis of glutamine to glutamate and ammonia as part of the synthesis of IGP and AICAR. The resulting ammonia molecule is channeled to the active site of HisF. This Haemophilus influenzae (strain ATCC 51907 / DSM 11121 / KW20 / Rd) protein is Imidazole glycerol phosphate synthase subunit HisH (hisH).